A 505-amino-acid chain; its full sequence is Lysine--tRNA ligase (505 aa).

The Mg(2+) site is built by Glu415 and Glu422.

This sequence belongs to the class-II aminoacyl-tRNA synthetase family. In terms of assembly, homodimer. Requires Mg(2+) as cofactor.

Its subcellular location is the cytoplasm. It carries out the reaction tRNA(Lys) + L-lysine + ATP = L-lysyl-tRNA(Lys) + AMP + diphosphate. The protein is Lysine--tRNA ligase of Xanthomonas axonopodis pv. citri (strain 306).